The primary structure comprises 473 residues: ATP synthase subunit beta (473 aa).

153-160 provides a ligand contact to ATP; that stretch reads GGAGVGKT.

This sequence belongs to the ATPase alpha/beta chains family. F-type ATPases have 2 components, CF(1) - the catalytic core - and CF(0) - the membrane proton channel. CF(1) has five subunits: alpha(3), beta(3), gamma(1), delta(1), epsilon(1). CF(0) has three main subunits: a(1), b(2) and c(9-12). The alpha and beta chains form an alternating ring which encloses part of the gamma chain. CF(1) is attached to CF(0) by a central stalk formed by the gamma and epsilon chains, while a peripheral stalk is formed by the delta and b chains.

It localises to the cell inner membrane. It catalyses the reaction ATP + H2O + 4 H(+)(in) = ADP + phosphate + 5 H(+)(out). In terms of biological role, produces ATP from ADP in the presence of a proton gradient across the membrane. The catalytic sites are hosted primarily by the beta subunits. The sequence is that of ATP synthase subunit beta from Rickettsia akari (strain Hartford).